A 299-amino-acid polypeptide reads, in one-letter code: Probable lipid kinase YegS (299 aa).

The DAGKc domain maps to 2–133 (ANFPASLLIL…IDMARVNDKT (132 aa)). ATP is bound by residues Thr40, 66–72 (GDGTINE), and Thr95. The Mg(2+) site is built by Leu215, Asp218, and Leu220. The active-site Proton acceptor is the Glu271.

It belongs to the diacylglycerol/lipid kinase family. YegS lipid kinase subfamily. It depends on Mg(2+) as a cofactor. Ca(2+) is required as a cofactor.

It localises to the cytoplasm. Functionally, probably phosphorylates lipids; the in vivo substrate is unknown. The sequence is that of Probable lipid kinase YegS from Salmonella heidelberg (strain SL476).